The primary structure comprises 284 residues: L-ribulose-5-phosphate 3-epimerase UlaE (284 aa).

Belongs to the L-ribulose-5-phosphate 3-epimerase family.

It carries out the reaction L-ribulose 5-phosphate = L-xylulose 5-phosphate. The protein operates within cofactor degradation; L-ascorbate degradation; D-xylulose 5-phosphate from L-ascorbate: step 3/4. Catalyzes the isomerization of L-xylulose-5-phosphate to L-ribulose-5-phosphate. Is involved in the anaerobic L-ascorbate utilization. The protein is L-ribulose-5-phosphate 3-epimerase UlaE of Salmonella paratyphi A (strain AKU_12601).